A 133-amino-acid chain; its full sequence is Bacteriohemerythrin (133 aa).

Fe cation contacts are provided by His-19, His-56, Glu-60, His-75, His-79, His-115, and Asp-120.

This sequence belongs to the hemerythrin family. As to quaternary structure, monomer.

Its function is as follows. Oxygen-binding protein. May be involved in a storage mechanism or for delivery to oxygen-requiring enzymes. The oxygen-binding site contains two iron atoms. In Campylobacter jejuni subsp. jejuni serotype O:23/36 (strain 81-176), this protein is Bacteriohemerythrin.